A 688-amino-acid polypeptide reads, in one-letter code: PTS system glucoside-specific EIICBA component (688 aa).

The PTS EIIC type-1 domain occupies 3-427 (KKLFGQLQRI…FKLKTPGRED (425 aa)). Helical transmembrane passes span 12–32 (IGKA…LLAF), 81–101 (LGLA…YLIM), 137–157 (LVLG…MGAL), 182–202 (FVPI…SFAW), 223–243 (LTTF…LHHI), 284–304 (AFTT…AFAI), 315–335 (VVGG…ITEP), 340–360 (FLFV…TSFL), 364–384 (LLGV…ILYG), and 395–415 (LVIP…DFAI). A PTS EIIB type-1 domain is found at 438–519 (AKLPFDVLDA…AKIMSGEITK (82 aa)). Cys-460 functions as the Phosphocysteine intermediate; for EIIB activity in the catalytic mechanism. Positions 560-664 (DQVFAGKMMG…SIVTPMIITN (105 aa)) constitute a PTS EIIA type-1 domain. His-612 functions as the Tele-phosphohistidine intermediate; for EIIA activity in the catalytic mechanism.

The protein resides in the cell membrane. Its function is as follows. The phosphoenolpyruvate-dependent sugar phosphotransferase system (sugar PTS), a major carbohydrate active -transport system, catalyzes the phosphorylation of incoming sugar substrates concomitantly with their translocation across the cell membrane. This system is involved in alpha- and beta-glucoside transport. This Staphylococcus aureus (strain bovine RF122 / ET3-1) protein is PTS system glucoside-specific EIICBA component (glcB).